The sequence spans 277 residues: Proteasome subunit beta type-7 (277 aa).

The propeptide at 1–43 is removed in mature form; the sequence is MAAVSVYAPPVGGFSFDNCRRNAVLEADFAKRGYKLPKVRKTG. Thr44 serves as the catalytic Nucleophile.

It belongs to the peptidase T1B family. In terms of assembly, the 26S proteasome consists of a 20S proteasome core and two 19S regulatory subunits. The 20S proteasome core is a barrel-shaped complex made of 28 subunits that are arranged in four stacked rings. The two outer rings are each formed by seven alpha subunits, and the two inner rings are formed by seven beta subunits. The proteolytic activity is exerted by three beta-subunits PSMB5, PSMB6 and PSMB7. (Microbial infection) Interacts with HIV-1 Tat protein. In terms of tissue distribution, expressed at a low level in colonic mucosa. Up-regulated in colorectal cancer tissues.

The protein resides in the cytoplasm. Its subcellular location is the nucleus. It catalyses the reaction Cleavage of peptide bonds with very broad specificity.. In terms of biological role, component of the 20S core proteasome complex involved in the proteolytic degradation of most intracellular proteins. This complex plays numerous essential roles within the cell by associating with different regulatory particles. Associated with two 19S regulatory particles, forms the 26S proteasome and thus participates in the ATP-dependent degradation of ubiquitinated proteins. The 26S proteasome plays a key role in the maintenance of protein homeostasis by removing misfolded or damaged proteins that could impair cellular functions, and by removing proteins whose functions are no longer required. Associated with the PA200 or PA28, the 20S proteasome mediates ubiquitin-independent protein degradation. This type of proteolysis is required in several pathways including spermatogenesis (20S-PA200 complex) or generation of a subset of MHC class I-presented antigenic peptides (20S-PA28 complex). Within the 20S core complex, PSMB7 displays a trypsin-like activity. The chain is Proteasome subunit beta type-7 from Homo sapiens (Human).